We begin with the raw amino-acid sequence, 696 residues long: Elongation factor G (696 aa).

The tr-type G domain occupies 8–290 (ERYRNIGISA…KVIELMPAPT (283 aa)). Residues 17–24 (AHIDAGKT), 88–92 (DTPGH), and 142–145 (NKMD) each bind GTP.

Belongs to the TRAFAC class translation factor GTPase superfamily. Classic translation factor GTPase family. EF-G/EF-2 subfamily.

It localises to the cytoplasm. In terms of biological role, catalyzes the GTP-dependent ribosomal translocation step during translation elongation. During this step, the ribosome changes from the pre-translocational (PRE) to the post-translocational (POST) state as the newly formed A-site-bound peptidyl-tRNA and P-site-bound deacylated tRNA move to the P and E sites, respectively. Catalyzes the coordinated movement of the two tRNA molecules, the mRNA and conformational changes in the ribosome. This is Elongation factor G from Thiobacillus denitrificans (strain ATCC 25259 / T1).